Here is a 1161-residue protein sequence, read N- to C-terminus: Immunoglobulin superfamily member 3 (1161 aa).

Residues 1-16 (MGTAALLILLAGVSWA) form the signal peptide. The Extracellular segment spans residues 17–1091 (QREVAIQPGP…LQSTICANDA (1075 aa)). Ig-like C2-type domains lie at 18–135 (REVA…AKVN), 140–258 (PDTL…WFPL), 272–382 (PTDK…RGPS), 402–523 (PLRT…WQLL), 541–651 (FAVT…RETS), 674–796 (PRLQ…EETS), 806–930 (PDAN…WYRR), and 947–1063 (PQLQ…WYLL). 2 disulfides stabilise this stretch: Cys39–Cys117 and Cys164–Cys242. Residues 246 to 248 (EWI) carry the EWI motif motif. Disulfide bonds link Cys298-Cys372, Cys428-Cys507, Cys562-Cys641, Cys697-Cys775, Cys831-Cys914, and Cys970-Cys1047. The helical transmembrane segment at 1092-1112 (LFYLVFFYPFPIFGILIITIL) threads the bilayer. Residues 1113-1161 (LVRFRHRPTGKPGEGKNGVPLLWIKEPHLNYSPTCLEPPVLSIHPGTID) are Cytoplasmic-facing.

The protein resides in the membrane. The polypeptide is Immunoglobulin superfamily member 3 (igsf3) (Xenopus tropicalis (Western clawed frog)).